A 162-amino-acid polypeptide reads, in one-letter code: Probable chemoreceptor glutamine deamidase CheD (162 aa).

The protein belongs to the CheD family.

The catalysed reaction is L-glutaminyl-[protein] + H2O = L-glutamyl-[protein] + NH4(+). Probably deamidates glutamine residues to glutamate on methyl-accepting chemotaxis receptors (MCPs), playing an important role in chemotaxis. The chain is Probable chemoreceptor glutamine deamidase CheD from Caldanaerobacter subterraneus subsp. tengcongensis (strain DSM 15242 / JCM 11007 / NBRC 100824 / MB4) (Thermoanaerobacter tengcongensis).